The sequence spans 94 residues: Co-chaperonin GroES (94 aa).

It belongs to the GroES chaperonin family. Heptamer of 7 subunits arranged in a ring. Interacts with the chaperonin GroEL.

The protein resides in the cytoplasm. Together with the chaperonin GroEL, plays an essential role in assisting protein folding. The GroEL-GroES system forms a nano-cage that allows encapsulation of the non-native substrate proteins and provides a physical environment optimized to promote and accelerate protein folding. GroES binds to the apical surface of the GroEL ring, thereby capping the opening of the GroEL channel. The sequence is that of Co-chaperonin GroES from Bacillus sp. (strain PS3).